Here is a 229-residue protein sequence, read N- to C-terminus: GTP cyclohydrolase 1 (229 aa).

A disordered region spans residues M1 to D26. C118, H121, and C189 together coordinate Zn(2+).

The protein belongs to the GTP cyclohydrolase I family. In terms of assembly, toroid-shaped homodecamer, composed of two pentamers of five dimers.

It catalyses the reaction GTP + H2O = 7,8-dihydroneopterin 3'-triphosphate + formate + H(+). The protein operates within cofactor biosynthesis; 7,8-dihydroneopterin triphosphate biosynthesis; 7,8-dihydroneopterin triphosphate from GTP: step 1/1. The protein is GTP cyclohydrolase 1 of Rhodopseudomonas palustris (strain BisB5).